The following is an 889-amino-acid chain: Alanine--tRNA ligase (889 aa).

Histidine 574, histidine 578, cysteine 676, and histidine 680 together coordinate Zn(2+).

This sequence belongs to the class-II aminoacyl-tRNA synthetase family. Zn(2+) serves as cofactor.

The protein localises to the cytoplasm. It catalyses the reaction tRNA(Ala) + L-alanine + ATP = L-alanyl-tRNA(Ala) + AMP + diphosphate. In terms of biological role, catalyzes the attachment of alanine to tRNA(Ala) in a two-step reaction: alanine is first activated by ATP to form Ala-AMP and then transferred to the acceptor end of tRNA(Ala). Also edits incorrectly charged Ser-tRNA(Ala) and Gly-tRNA(Ala) via its editing domain. This is Alanine--tRNA ligase from Thermobifida fusca (strain YX).